Reading from the N-terminus, the 307-residue chain is Manganese-dependent inorganic pyrophosphatase (307 aa).

Residues His7, Asp11, Asp13, Asp66, His88, and Asp147 each contribute to the Mn(2+) site.

Mn(2+) serves as cofactor.

It localises to the cytoplasm. It carries out the reaction diphosphate + H2O = 2 phosphate + H(+). The chain is Manganese-dependent inorganic pyrophosphatase (ppaC) from Methanocaldococcus jannaschii (strain ATCC 43067 / DSM 2661 / JAL-1 / JCM 10045 / NBRC 100440) (Methanococcus jannaschii).